Here is an 827-residue protein sequence, read N- to C-terminus: 6-phosphofructo-2-kinase 1 (827 aa).

2 disordered regions span residues 1-97 (MFKP…ENSA) and 149-175 (TRHH…DGLI). A compositionally biased stretch (low complexity) spans 31 to 41 (SQDSSYDLLSR). The segment covering 42-59 (SSDDKIDAEKGPHDELSK) has biased composition (basic and acidic residues). Polar residues predominate over residues 72–97 (TPISSNWNSPGITEENTPSDSPENSA). Phosphoserine is present on Ser-92. At Thr-157 the chain carries Phosphothreonine. An ATP-binding site is contributed by 190 to 197 (GLPATGKS). Active-site residues include Asp-277 and Cys-309. Arg-343 is a beta-D-fructose 6-phosphate binding site. The active-site Phosphoserine intermediate is the Ser-404. Glu-497 is an active-site residue. The active-site Proton donor is His-565. Ser-644, Ser-652, Ser-659, and Ser-667 each carry phosphoserine. Disordered regions lie at residues 649 to 704 (APPS…SNFN) and 799 to 827 (HGKD…QSHV). The span at 671 to 682 (SASSSQSELSEQ) shows a compositional bias: low complexity. Residues 683–704 (PKNSVSAQTGSNNTTLIGSNFN) show a composition bias toward polar residues.

The catalysed reaction is beta-D-fructose 6-phosphate + ATP = beta-D-fructose 2,6-bisphosphate + ADP + H(+). Phosphorylation results in the activation of the kinase activity. Its function is as follows. Synthesis of fructose 2,6-bisphosphate. This is 6-phosphofructo-2-kinase 1 (PFK26) from Saccharomyces cerevisiae (strain ATCC 204508 / S288c) (Baker's yeast).